The sequence spans 147 residues: Cysteine proteinase inhibitor 2 (147 aa).

A signal peptide spans 1 to 27 (MATMLKVSLVLSLLGFLVIAVVTPSAA). The region spanning 87-117 (LQFSRVVSAQKQVVAGLKYYLRIEVTQPNGS) is the Cystatin domain. Residues 98-102 (QVVAG) carry the Secondary area of contact motif. A glycan (N-linked (GlcNAc...) asparagine) is linked at N115.

It belongs to the cystatin family. Phytocystatin subfamily.

Its subcellular location is the secreted. Functionally, specific inhibitor of cysteine proteinases. Probably involved in the regulation of endogenous processes and in defense against pests and pathogens. The chain is Cysteine proteinase inhibitor 2 (CYS2) from Arabidopsis thaliana (Mouse-ear cress).